A 686-amino-acid polypeptide reads, in one-letter code: Putative pentatricopeptide repeat-containing protein At3g49142 (686 aa).

12 PPR repeats span residues 73–103, 104–138, 139–173, 174–204, 205–239, 240–272, 273–307, 308–342, 343–373, 374–408, 409–439, and 445–475; these read NSSL…IPER, NVII…NVRP, DHYT…GLSS, TLFV…MSRR, DVVS…KISH, DAGT…MGKK, SLVS…GFEP, DAVS…KLIP, NLLL…MKSR, DVVS…GLVP, DSIA…MTDH, and RLEH…MSME. The interval 480–555 is type E motif; sequence VWGALLGACR…NPGASNVEVN (76 aa). The interval 556-586 is type E(+) motif; the sequence is RIIHTFLVGDRSHPQSDEIYRELDVLVKKMK. Residues 587–686 are type DYW motif; the sequence is ELGYVPDSES…FGVCSCGDYW (100 aa).

It belongs to the PPR family. PCMP-H subfamily.

The polypeptide is Putative pentatricopeptide repeat-containing protein At3g49142 (PCMP-H77) (Arabidopsis thaliana (Mouse-ear cress)).